Consider the following 165-residue polypeptide: Protein OPG091 (165 aa).

It belongs to the orthopoxvirus OPG091 family.

The protein localises to the virion. The protein resides in the host cytoplasm. Contributes to vaccinia virus virulence in mice but not to replication in cell culture. In Vaccinia virus (strain Western Reserve) (VACV), this protein is Protein OPG091 (OPG091).